The chain runs to 622 residues: UvrABC system protein C (622 aa).

The GIY-YIG domain occupies D13–I92. One can recognise a UVR domain in the interval K204 to I239.

This sequence belongs to the UvrC family. Interacts with UvrB in an incision complex.

It localises to the cytoplasm. The UvrABC repair system catalyzes the recognition and processing of DNA lesions. UvrC both incises the 5' and 3' sides of the lesion. The N-terminal half is responsible for the 3' incision and the C-terminal half is responsible for the 5' incision. This Clostridium kluyveri (strain ATCC 8527 / DSM 555 / NBRC 12016 / NCIMB 10680 / K1) protein is UvrABC system protein C.